Here is a 132-residue protein sequence, read N- to C-terminus: MSMTDPIADMLVRIKNAASVGKPNVRFPFSKVKLAIALVLKNEGYIFDAKVIQSDNSKSDIEVVLKYFEGRPVIRILKRVSRSGLRKYCGKAELPEVLGGLGVSIISTSKGIMTDSKARESGVGGEVLCFVA.

This sequence belongs to the universal ribosomal protein uS8 family. In terms of assembly, part of the 30S ribosomal subunit. Contacts proteins S5 and S12.

Functionally, one of the primary rRNA binding proteins, it binds directly to 16S rRNA central domain where it helps coordinate assembly of the platform of the 30S subunit. The polypeptide is Small ribosomal subunit protein uS8 (Xylella fastidiosa (strain M23)).